Consider the following 256-residue polypeptide: uncharacterized protein (256 aa).

This sequence to B.subtilis LplA.

This is an uncharacterized protein from Niallia circulans (Bacillus circulans).